The chain runs to 546 residues: Protein phosphatase 1G (546 aa).

The N-myristoyl glycine moiety is linked to residue glycine 2. Arginine 22 is modified (omega-N-methylarginine). A PPM-type phosphatase domain is found at 26-505 (PYGFSAMQGW…DNMTCIIICF (480 aa)). Residues aspartate 60 and glycine 61 each contribute to the Mn(2+) site. Disordered stretches follow at residues 116–139 (QIAGRPTEDEDEKEKVADEDDVDN) and 161–328 (GQNC…SDSG). Residue threonine 122 is modified to Phosphothreonine. Positions 123–139 (EDEDEKEKVADEDDVDN) are enriched in acidic residues. Residue serine 183 is modified to Phosphoserine. The segment covering 259–312 (DSEDESDEAEEEEEDSEECSEEEDGYSSEEAENEEDEDDTEEAEEDDEEEEEEM) has biased composition (acidic residues). Lysine 383 is modified (N6-acetyllysine). Positions 441 and 496 each coordinate Mn(2+). Positions 512–546 (ELQPESGKRKLEEVLSTEGAEENGNSDKKKKAKRD) are disordered. Serine 527 bears the Phosphoserine mark.

It belongs to the PP2C family. Interacts with NOL3; may dephosphorylate NOL3. It depends on Mg(2+) as a cofactor. Mn(2+) serves as cofactor. In terms of tissue distribution, widely expressed. Most abundant in testis, skeletal muscle, and heart.

The protein localises to the cytoplasm. The protein resides in the membrane. It catalyses the reaction O-phospho-L-seryl-[protein] + H2O = L-seryl-[protein] + phosphate. The catalysed reaction is O-phospho-L-threonyl-[protein] + H2O = L-threonyl-[protein] + phosphate. In Homo sapiens (Human), this protein is Protein phosphatase 1G (PPM1G).